The chain runs to 301 residues: uncharacterized protein (301 aa).

The first 25 residues, 1 to 25 (MKFKNTLSIFKILIILFSFYNVAFS), serve as a signal peptide directing secretion. At 26-279 (DDTEKYTFKG…STTGSKDSST (254 aa)) the chain is on the extracellular side. The disordered stretch occupies residues 174–281 (LYTGSSNTPN…TGSKDSSTGN (108 aa)). N-linked (GlcNAc...) asparagine glycans are attached at residues Asn191, Asn212, Asn234, and Asn241. Positions 204–234 (SSSDSTNSNSSSTDTASSSPSSSPSSSPSPN) are enriched in low complexity. The segment covering 254–281 (GGVETSTAGSSTGTTSSTTGSKDSSTGN) has biased composition (low complexity). Residues 280–300 (GNSILPTLIIVTFFVLTLVIM) form a helical membrane-spanning segment. Ser301 is a topological domain (cytoplasmic).

The protein localises to the membrane. This is an uncharacterized protein from Dictyostelium discoideum (Social amoeba).